The sequence spans 394 residues: Probable fimbrial assembly protein FimD, serogroup H1 (394 aa).

The sequence is that of Probable fimbrial assembly protein FimD, serogroup H1 (fimD) from Dichelobacter nodosus (Bacteroides nodosus).